The primary structure comprises 107 residues: Flagellar transcriptional regulator FlhD (107 aa).

This sequence belongs to the FlhD family. As to quaternary structure, homodimer; disulfide-linked. Forms a heterohexamer composed of two FlhC and four FlhD subunits. Each FlhC binds a FlhD dimer, forming a heterotrimer, and a hexamer assembles by dimerization of two heterotrimers.

It is found in the cytoplasm. Its function is as follows. Functions in complex with FlhC as a master transcriptional regulator that regulates transcription of several flagellar and non-flagellar operons by binding to their promoter region. Activates expression of class 2 flagellar genes, including fliA, which is a flagellum-specific sigma factor that turns on the class 3 genes. Also regulates genes whose products function in a variety of physiological pathways. The protein is Flagellar transcriptional regulator FlhD of Bordetella avium (strain 197N).